Consider the following 458-residue polypeptide: Methionine aminopeptidase 2-2 (458 aa).

Positions 1 to 14 are enriched in basic and acidic residues; sequence MGSKTPERDGHKGQ. Residues 1-93 are disordered; that stretch reads MGSKTPERDG…QSSPPRVPLS (93 aa). Residues 67–82 show a composition bias toward basic residues; sequence QKKKRKSKKKGKKKAA. Histidine 209 contacts substrate. The a divalent metal cation site is built by aspartate 230, aspartate 241, and histidine 310. Residue histidine 318 coordinates substrate. Residues glutamate 343 and glutamate 439 each contribute to the a divalent metal cation site.

The protein belongs to the peptidase M24A family. Methionine aminopeptidase eukaryotic type 2 subfamily. Co(2+) serves as cofactor. Requires Zn(2+) as cofactor. Mn(2+) is required as a cofactor. The cofactor is Fe(2+).

It localises to the cytoplasm. The enzyme catalyses Release of N-terminal amino acids, preferentially methionine, from peptides and arylamides.. Cotranslationally removes the N-terminal methionine from nascent proteins. The N-terminal methionine is often cleaved when the second residue in the primary sequence is small and uncharged (Met-Ala-, Cys, Gly, Pro, Ser, Thr, or Val). This Emericella nidulans (strain FGSC A4 / ATCC 38163 / CBS 112.46 / NRRL 194 / M139) (Aspergillus nidulans) protein is Methionine aminopeptidase 2-2.